The primary structure comprises 774 residues: Ion-translocating oxidoreductase complex subunit C (774 aa).

4Fe-4S ferredoxin-type domains lie at 359 to 389 (ELPE…QQLH) and 399 to 428 (QLLA…VQYY). 8 residues coordinate [4Fe-4S] cluster: cysteine 369, cysteine 372, cysteine 375, cysteine 379, cysteine 408, cysteine 411, cysteine 414, and cysteine 418. Residues 453–490 (EQRQARLRRDEERRAAERAQRAEKAALARAAQAEREEA) show a composition bias toward basic and acidic residues. Residues 453–493 (EQRQARLRRDEERRAAERAQRAEKAALARAAQAEREEAAPA) are disordered.

The protein belongs to the 4Fe4S bacterial-type ferredoxin family. RnfC subfamily. In terms of assembly, the complex is composed of six subunits: RnfA, RnfB, RnfC, RnfD, RnfE and RnfG. Requires [4Fe-4S] cluster as cofactor.

It is found in the cell inner membrane. Part of a membrane-bound complex that couples electron transfer with translocation of ions across the membrane. In Pseudomonas aeruginosa (strain ATCC 15692 / DSM 22644 / CIP 104116 / JCM 14847 / LMG 12228 / 1C / PRS 101 / PAO1), this protein is Ion-translocating oxidoreductase complex subunit C.